The following is a 543-amino-acid chain: Ipecoside beta-D-glucosidase IpeGLU1 (543 aa).

A beta-D-glucoside-binding positions include Q36, H140, 185-186 (NE), Y350, E422, W471, and F487. Residue E186 is the Proton donor of the active site. E422 serves as the catalytic Nucleophile.

This sequence belongs to the glycosyl hydrolase 1 family. Expressed in roots.

It localises to the cytoplasm. The protein localises to the cytosol. The catalysed reaction is deacetylipecoside + H2O = deacetylipecoside aglycone + D-glucose. The enzyme catalyses deacetylisoipecoside + H2O = deacetylisoipecoside aglycone + D-glucose. It carries out the reaction 6-O-methyldeacetylipecoside + H2O = 6-O-methyldeacetylipecoside aglycone + D-glucose. It catalyses the reaction 6-O-methyldeacetylisoipecoside + H2O = 6-O-methyldeacetylisoipecoside aglycone + D-glucose. The catalysed reaction is ipecoside + H2O = ipecoside aglycone + D-glucose. The enzyme catalyses 3alpha(S)-strictosidine + H2O = strictosidine aglycone + D-glucose. It functions in the pathway alkaloid biosynthesis. Its activity is regulated as follows. Inhibited by Cu(2+), Fe(2+) and Zn(2+). Its function is as follows. Beta-glucosidase involved in the biosynthesis of ipecac and benzylisoquinoline monoterpenoid-isoquinoline alkaloids natural products, starting by the condensation of dopamine and secologanin, and including emetine and cephaeline, drugs used both as anti-protozoal (e.g. treatment of ameobiasis) and as emetic agents. In response to pathogen and herbivore attack, triggers the release of toxic ipecoside aglycon to trigger defense responses. Catalyzes deglucosylation both on (1S)-diastereomer and (1R)-diastereomer substrates, including ipecoside, the main alkaloidal glucoside. Also active on N-deacetylisoipecoside, 6-O-methyl-N-deacetylisoipecoside, 6-O-methyl-N-deacetylipecoside and N-deacetylipecoside. This is Ipecoside beta-D-glucosidase IpeGLU1 from Carapichea ipecacuanha (Ipecac).